Here is a 270-residue protein sequence, read N- to C-terminus: Energy-coupling factor transporter transmembrane protein EcfT (270 aa).

Transmembrane regions (helical) follow at residues 36 to 56, 72 to 92, 108 to 128, and 248 to 268; these read LFIVNSFKGYIFIVVFTLISI, PIFILVLITAVLNIFMTGGAN, LIMAAFMALRLVFLIIGTSLL, and FIASLCALVLVCISILSRIWW.

This sequence belongs to the energy-coupling factor EcfT family. In terms of assembly, forms a stable energy-coupling factor (ECF) transporter complex composed of 2 membrane-embedded substrate-binding proteins (S component), 2 ATP-binding proteins (A component) and 2 transmembrane proteins (T component). May be able to interact with more than 1 S component at a time.

It is found in the cell membrane. In terms of biological role, transmembrane (T) component of an energy-coupling factor (ECF) ABC-transporter complex. Unlike classic ABC transporters this ECF transporter provides the energy necessary to transport a number of different substrates. The polypeptide is Energy-coupling factor transporter transmembrane protein EcfT (Clostridium kluyveri (strain ATCC 8527 / DSM 555 / NBRC 12016 / NCIMB 10680 / K1)).